The following is a 188-amino-acid chain: ATP synthase subunit b (188 aa).

Residues 19–39 (VYVLGATIVSFLVLFLFITYF) traverse the membrane as a helical segment.

Belongs to the ATPase B chain family. F-type ATPases have 2 components, F(1) - the catalytic core - and F(0) - the membrane proton channel. F(1) has five subunits: alpha(3), beta(3), gamma(1), delta(1), epsilon(1). F(0) has three main subunits: a(1), b(2) and c(10-14). The alpha and beta chains form an alternating ring which encloses part of the gamma chain. F(1) is attached to F(0) by a central stalk formed by the gamma and epsilon chains, while a peripheral stalk is formed by the delta and b chains.

It is found in the cell membrane. Functionally, f(1)F(0) ATP synthase produces ATP from ADP in the presence of a proton or sodium gradient. F-type ATPases consist of two structural domains, F(1) containing the extramembraneous catalytic core and F(0) containing the membrane proton channel, linked together by a central stalk and a peripheral stalk. During catalysis, ATP synthesis in the catalytic domain of F(1) is coupled via a rotary mechanism of the central stalk subunits to proton translocation. In terms of biological role, component of the F(0) channel, it forms part of the peripheral stalk, linking F(1) to F(0). The sequence is that of ATP synthase subunit b from Mesomycoplasma hyopneumoniae (strain 7448) (Mycoplasma hyopneumoniae).